The chain runs to 307 residues: Acetaldehyde dehydrogenase (307 aa).

12–15 (SGNI) contributes to the NAD(+) binding site. Cys130 functions as the Acyl-thioester intermediate in the catalytic mechanism. Residues 161-169 (SVGPGTRQN) and Asn272 contribute to the NAD(+) site.

This sequence belongs to the acetaldehyde dehydrogenase family.

The enzyme catalyses acetaldehyde + NAD(+) + CoA = acetyl-CoA + NADH + H(+). The polypeptide is Acetaldehyde dehydrogenase (Shewanella pealeana (strain ATCC 700345 / ANG-SQ1)).